A 145-amino-acid polypeptide reads, in one-letter code: MIALIQRVTRASVTVEGEVTGEIGAGLLVLLGVEKDDDEQKANRLCERVLGYRIFSDAEGKMNLNVQQAGGSVLVVSQFTLAADTERGMRPSFSKGASPDRAEALYDYFVERCCQQEMNTQTGRFAADMQVSLVNDGPVTFWLQV.

The short motif at 137-138 is the Gly-cisPro motif, important for rejection of L-amino acids element; sequence GP.

This sequence belongs to the DTD family. As to quaternary structure, homodimer.

It is found in the cytoplasm. It carries out the reaction glycyl-tRNA(Ala) + H2O = tRNA(Ala) + glycine + H(+). The enzyme catalyses a D-aminoacyl-tRNA + H2O = a tRNA + a D-alpha-amino acid + H(+). An aminoacyl-tRNA editing enzyme that deacylates mischarged D-aminoacyl-tRNAs. Also deacylates mischarged glycyl-tRNA(Ala), protecting cells against glycine mischarging by AlaRS. Acts via tRNA-based rather than protein-based catalysis; rejects L-amino acids rather than detecting D-amino acids in the active site. By recycling D-aminoacyl-tRNA to D-amino acids and free tRNA molecules, this enzyme counteracts the toxicity associated with the formation of D-aminoacyl-tRNA entities in vivo and helps enforce protein L-homochirality. The sequence is that of D-aminoacyl-tRNA deacylase from Shigella dysenteriae serotype 1 (strain Sd197).